A 2522-amino-acid polypeptide reads, in one-letter code: Neurogenic locus notch homolog protein 1 (2522 aa).

Positions 1–19 are cleaved as a signal peptide; that stretch reads MYRIGLLVLIWSLLGLAQG. EGF-like domains are found at residues 20–57, 58–99, 102–140, and 141–177; these read LRCT…ERCQ, YPNP…KVCL, VDNA…DSCQ, and QADP…ATCK. Over 20 to 1730 the chain is Extracellular; the sequence is LRCTQTAEMC…ETAKPPPPLY (1711 aa). 33 disulfides stabilise this stretch: Cys-22-Cys-35, Cys-29-Cys-45, Cys-47-Cys-56, Cys-62-Cys-74, Cys-68-Cys-87, Cys-89-Cys-98, Cys-106-Cys-117, Cys-111-Cys-128, Cys-130-Cys-139, Cys-145-Cys-156, Cys-150-Cys-165, Cys-167-Cys-176, Cys-183-Cys-194, Cys-188-Cys-203, Cys-205-Cys-214, Cys-221-Cys-232, Cys-226-Cys-242, Cys-244-Cys-253, Cys-260-Cys-271, Cys-265-Cys-280, Cys-282-Cys-291, Cys-298-Cys-311, Cys-305-Cys-320, Cys-322-Cys-331, Cys-338-Cys-349, Cys-343-Cys-358, Cys-360-Cys-369, Cys-375-Cys-386, Cys-380-Cys-397, Cys-399-Cys-408, Cys-415-Cys-428, Cys-422-Cys-437, and Cys-439-Cys-448. One can recognise an EGF-like 5; calcium-binding domain in the interval 179-215; the sequence is DINECSQNPCRNGGQCLNEFGSYRCNCQNRFTGRNCE. One can recognise an EGF-like 6 domain in the interval 217–254; the sequence is PYVPCNPSPCLNGGTCRQTDDTSYECTCLPGFSGQNCE. A glycan (O-linked (Fuc...) threonine; alternate) is linked at Thr-231. O-linked (GalNAc...) threonine; alternate glycosylation is present at Thr-231. Positions 256–292 constitute an EGF-like 7; calcium-binding domain; sequence NIDDCPSNNCRNGGTCVDGVNTYNCQCPPDWTGQYCT. An EGF-like 8; calcium-binding domain is found at 294–332; the sequence is DVDECQLMPNACQNGGTCHNTYGGYNCVCVNGWTGEDCS. Residues 334-370 enclose the EGF-like 9; calcium-binding domain; it reads NIDDCANAACHSGATCHDRVASFFCECPHGRTGLLCH. Positions 371-409 constitute an EGF-like 10 domain; the sequence is LDNACISNPCNEGSNCDTNPVNGKAICTCPPGYTGPACN. In terms of domain architecture, EGF-like 11; calcium-binding spans 411–449; sequence DVDECSLGANPCEHGGRCTNTLGSFQCNCPQGYAGPRCE. 2 residues coordinate Ca(2+): Thr-431 and Ser-434. The O-linked (Glc...) serine glycan is linked to Ser-434. Residues Asp-451, Val-452, and Glu-454 each contribute to the Ca(2+) site. The EGF-like 12; calcium-binding domain occupies 451 to 487; the sequence is DVNECLSNPCQNDATCLDQIGEFQCICMPGYEGLYCE. 3 cysteine pairs are disulfide-bonded: Cys-455–Cys-466, Cys-460–Cys-475, and Cys-477–Cys-486. Ser-457 carries O-linked (Glc...) serine glycosylation. The O-linked (Fuc...) threonine glycan is linked to Thr-465. Residues Asp-468 and Gln-469 each contribute to the Ca(2+) site. Residues Asn-489, Ile-490, and Glu-492 each coordinate Ca(2+). The 37-residue stretch at 489-525 folds into the EGF-like 13; calcium-binding domain; that stretch reads NIDECASNPCLHNGKCVDKINEFHCECPTGFNGNLCQ. Intrachain disulfides connect Cys-493–Cys-504, Cys-498–Cys-513, Cys-515–Cys-524, Cys-531–Cys-542, Cys-536–Cys-551, Cys-553–Cys-562, Cys-569–Cys-579, Cys-574–Cys-588, Cys-590–Cys-599, Cys-606–Cys-617, Cys-611–Cys-626, Cys-628–Cys-637, Cys-644–Cys-654, Cys-649–Cys-663, Cys-665–Cys-674, Cys-681–Cys-692, Cys-686–Cys-701, Cys-703–Cys-712, Cys-719–Cys-729, Cys-724–Cys-738, Cys-740–Cys-749, Cys-756–Cys-767, Cys-761–Cys-776, Cys-778–Cys-787, Cys-794–Cys-805, Cys-799–Cys-814, Cys-816–Cys-825, Cys-832–Cys-843, Cys-837–Cys-854, Cys-856–Cys-865, Cys-872–Cys-883, Cys-877–Cys-892, Cys-894–Cys-903, Cys-910–Cys-921, Cys-915–Cys-930, Cys-932–Cys-941, Cys-948–Cys-959, Cys-953–Cys-968, Cys-970–Cys-979, Cys-986–Cys-997, Cys-991–Cys-1006, Cys-1008–Cys-1017, Cys-1024–Cys-1035, Cys-1029–Cys-1044, Cys-1046–Cys-1055, Cys-1062–Cys-1073, Cys-1067–Cys-1082, Cys-1084–Cys-1093, Cys-1100–Cys-1121, Cys-1115–Cys-1130, Cys-1132–Cys-1141, Cys-1148–Cys-1159, Cys-1153–Cys-1168, Cys-1170–Cys-1179, Cys-1186–Cys-1197, Cys-1191–Cys-1206, Cys-1208–Cys-1217, Cys-1224–Cys-1243, Cys-1237–Cys-1252, Cys-1254–Cys-1263, Cys-1270–Cys-1283, Cys-1275–Cys-1292, Cys-1294–Cys-1303, Cys-1310–Cys-1321, Cys-1315–Cys-1333, Cys-1335–Cys-1344, Cys-1351–Cys-1362, Cys-1356–Cys-1371, Cys-1373–Cys-1382, Cys-1390–Cys-1401, Cys-1395–Cys-1412, Cys-1414–Cys-1423, Cys-1447–Cys-1470, Cys-1452–Cys-1465, and Cys-1461–Cys-1477. Residue Ser-495 is glycosylated (O-linked (Glc...) serine). The Ca(2+) site is built by Asp-506 and Lys-507. Residues 527 to 563 form the EGF-like 14; calcium-binding domain; sequence DVDECASTPCKNGAKCLDGPNSYTCQCTEGFTGRHCE. One can recognise an EGF-like 15; calcium-binding domain in the interval 565-600; the sequence is DINECIPDPCHYGTCKDGIATFTCLCRPGYTGRLCD. The region spanning 602–638 is the EGF-like 16; calcium-binding domain; sequence DINECLSQPCQNGGQCTDRENGYICTCPKGTTGVNCE. The 36-residue stretch at 640-675 folds into the EGF-like 17; calcium-binding domain; that stretch reads NLDDCASNPCDYGKCIDKIDGYECTCEPGYTGKMCN. Positions 677 to 713 constitute an EGF-like 18; calcium-binding domain; it reads NIDECASNPCRNGGTCKDKINGFTCVCPDGYHDHMCL. The 36-residue stretch at 715-750 folds into the EGF-like 19; calcium-binding domain; that stretch reads EVNECNSNPCIHGTCHDGINGYKCDCDAGWSGSNCD. The EGF-like 20; calcium-binding domain occupies 752 to 788; the sequence is NNNECESNPCMNGGTCKDMTGAYICTCRAGFSGPNCQ. The 37-residue stretch at 790 to 826 folds into the EGF-like 21; calcium-binding domain; the sequence is NINECASNPCLNRGTCIDDVAGYKCNCMLPYTGAICE. One can recognise an EGF-like 22 domain in the interval 828 to 866; that stretch reads VLAPCSGSPCKNGGRCKESEDYETFSCECPPGWQGQTCE. One can recognise an EGF-like 23; calcium-binding domain in the interval 868–904; that stretch reads DMNECVNRPCRNGAMCQNTNGSYKCNCKPGYAGRHCE. A glycan (N-linked (GlcNAc...) asparagine) is linked at Asn-887. One can recognise an EGF-like 24; calcium-binding domain in the interval 906–942; sequence DIDDCQPNPCHNGGSCSDGINMFFCNCPAGFRGPKCE. One can recognise an EGF-like 25; calcium-binding domain in the interval 944 to 980; that stretch reads DINECASNPCKNGANCTDCVNSYTCTCQPGFSGIHCE. Residue Asn-958 is glycosylated (N-linked (GlcNAc...) asparagine). The EGF-like 26 domain occupies 982 to 1018; it reads NTPDCTESSCFNGGTCIDGINTFSCQCPPGFTGNYCQ. Residues 1020-1056 enclose the EGF-like 27; calcium-binding domain; that stretch reads DINECDSKPCLNGGTCQDSYGAYKCTCPQGYTGLNCQ. EGF-like domains lie at 1058–1094 and 1096–1142; these read LVRW…VYCD and PSVS…SYCE. One can recognise an EGF-like 30; calcium-binding domain in the interval 1144 to 1180; it reads QVDECSPNPCQNGATCTDYLGGYSCECVAGYHGVNCS. Asn-1178 is a glycosylation site (N-linked (GlcNAc...) asparagine). Residues 1182–1218 form the EGF-like 31; calcium-binding domain; it reads EINECLSHPCHNGGTCIDLINTYKCSCPRGTQGVHCE. Residues 1220-1264 form the EGF-like 32; calcium-binding domain; sequence NVDDCTPFYDSVSLEPKCFNNGKCFDRVGGYNCICPPGFVGERCE. EGF-like domains are found at residues 1266–1304, 1306–1345, 1347–1383, and 1386–1424; these read DVNE…RRCD, VVDG…ATCE, DART…ATCQ, and VVSP…LFCH. Thr-1400 carries an O-linked (Fuc...) threonine; alternate glycan. Thr-1400 carries an O-linked (GalNAc...) threonine; alternate glycan. 3 LNR repeats span residues 1447–1487, 1488–1529, and 1530–1564; these read CENE…PWKN, CTQS…CNPL, and YDQY…NMPE. Ca(2+) contacts are provided by Asn-1458, Asp-1473, and Asp-1476. A glycan (N-linked (GlcNAc...) asparagine) is linked at Asn-1487. 5 cysteine pairs are disulfide-bonded: Cys-1488–Cys-1512, Cys-1494–Cys-1507, Cys-1503–Cys-1519, Cys-1534–Cys-1547, and Cys-1543–Cys-1559. Asp-1500 is a binding site for Ca(2+). Asn-1508 is a glycosylation site (N-linked (GlcNAc...) asparagine). Ca(2+)-binding residues include Asp-1515, Asp-1518, Asp-1540, Asp-1555, and Asp-1558. Residue Asn-1584 is glycosylated (N-linked (GlcNAc...) asparagine). Residues 1731-1751 form a helical membrane-spanning segment; the sequence is AMFSMLVIPLLIIFVIMVVIV. Over 1752–2522 the chain is Cytoplasmic; it reads NKKRRREHGQ…QRTHIPEAFK (771 aa). 6 ANK repeats span residues 1877–1920, 1925–1954, 1958–1988, 1992–2021, 2025–2054, and 2058–2087; these read DGFT…QLHN, TGET…DANV, MGRT…DLDA, DGTT…DVNA, FGKS…NKDM, and KEET…NRDI. 3 disordered regions span residues 2146–2229, 2365–2404, and 2449–2522; these read MKPS…MPLN, LMQA…PFCS, and LTPP…EAFK. Residues 2184–2200 are compositionally biased toward low complexity; that stretch reads SLLDSGSSGVLSPVDSL. Polar residues predominate over residues 2218-2229; that stretch reads SPFQQSPSMPLN. Residues 2365–2390 show a composition bias toward low complexity; it reads LMQAQQMQQQQNLQLHQSVQQQQHQN. 2 stretches are compositionally biased toward polar residues: residues 2391–2404 and 2449–2469; these read SNAT…PFCS and LTPP…SHQL. Residues 2479-2494 show a composition bias toward low complexity; it reads PSPESPDQWSSSSPHS. The span at 2495-2514 shows a compositional bias: polar residues; it reads NMSDWSEGISSPPTSMQPQR.

The protein belongs to the NOTCH family. Post-translationally, O-glycosylated on the EGF-like domains. Contains both O-linked fucose and O-linked glucose. O-linked glycosylation by galnt11 is involved in determination of left/right symmetry: glycosylation promotes activation of notch1, possibly by promoting cleavage by adam17, modulating the balance between motile and immotile (sensory) cilia at the left-right organiser (LRO). In terms of processing, synthesized in the endoplasmic reticulum as an inactive form which is proteolytically cleaved by a furin-like convertase in the trans-Golgi network before it reaches the plasma membrane to yield an active, ligand-accessible form. Cleavage results in a C-terminal fragment N(TM) and a N-terminal fragment N(EC). Following ligand binding, it is cleaved by adam17 to yield a membrane-associated intermediate fragment called notch extracellular truncation (NEXT). Following endocytosis, this fragment is then cleaved by presenilin dependent gamma-secretase to release a Notch-derived peptide containing the intracellular domain (NICD) from the membrane.

It is found in the cell membrane. Its subcellular location is the nucleus. Its function is as follows. Functions as a receptor for membrane-bound ligands Jagged-1 (JAG1), Jagged-2 (JAG2) and Delta-1 (DLL1) to regulate cell-fate determination. Upon ligand activation through the released notch intracellular domain (NICD) it forms a transcriptional activator complex with RBPJ/RBPSUH and activates genes of the enhancer of split locus. Affects the implementation of differentiation, proliferation and apoptotic programs. Involved in angiogenesis; negatively regulates endothelial cell proliferation and migration and angiogenic sprouting. Involved in the maturation of both CD4(+) and CD8(+) cells in the thymus. Important for follicular differentiation and possibly cell fate selection within the follicle. During cerebellar development, functions as a receptor for neuronal DNER and is involved in the differentiation of Bergmann glia. Represses neuronal and myogenic differentiation. May play an essential role in postimplantation development, probably in some aspect of cell specification and/or differentiation. May be involved in mesoderm development, somite formation and neurogenesis. Involved in determination of left/right symmetry by modulating the balance between motile and immotile (sensory) cilia at the left-right organiser (LRO). This Xenopus tropicalis (Western clawed frog) protein is Neurogenic locus notch homolog protein 1 (notch1).